The chain runs to 152 residues: 3-hydroxyacyl-[acyl-carrier-protein] dehydratase FabZ (152 aa).

Residue His58 is part of the active site.

The protein belongs to the thioester dehydratase family. FabZ subfamily.

Its subcellular location is the cytoplasm. It carries out the reaction a (3R)-hydroxyacyl-[ACP] = a (2E)-enoyl-[ACP] + H2O. Functionally, involved in unsaturated fatty acids biosynthesis. Catalyzes the dehydration of short chain beta-hydroxyacyl-ACPs and long chain saturated and unsaturated beta-hydroxyacyl-ACPs. The polypeptide is 3-hydroxyacyl-[acyl-carrier-protein] dehydratase FabZ (Prochlorococcus marinus (strain MIT 9215)).